We begin with the raw amino-acid sequence, 922 residues long: Isoleucine--tRNA ligase (922 aa).

Residues 57 to 67 (PYANGDIHLGH) carry the 'HIGH' region motif. L-isoleucyl-5'-AMP is bound at residue Glu553. The short motif at 594-598 (KMSKS) is the 'KMSKS' region element. Lys597 is an ATP binding site. 4 residues coordinate Zn(2+): Cys892, Cys895, Cys912, and Cys915.

Belongs to the class-I aminoacyl-tRNA synthetase family. IleS type 1 subfamily. As to quaternary structure, monomer. Zn(2+) serves as cofactor.

The protein resides in the cytoplasm. The catalysed reaction is tRNA(Ile) + L-isoleucine + ATP = L-isoleucyl-tRNA(Ile) + AMP + diphosphate. Its function is as follows. Catalyzes the attachment of isoleucine to tRNA(Ile). As IleRS can inadvertently accommodate and process structurally similar amino acids such as valine, to avoid such errors it has two additional distinct tRNA(Ile)-dependent editing activities. One activity is designated as 'pretransfer' editing and involves the hydrolysis of activated Val-AMP. The other activity is designated 'posttransfer' editing and involves deacylation of mischarged Val-tRNA(Ile). The protein is Isoleucine--tRNA ligase of Desulfitobacterium hafniense (strain Y51).